A 353-amino-acid chain; its full sequence is 3-isopropylmalate dehydrogenase (353 aa).

73-86 (GPQYDTLDRPLRPE) contacts NAD(+). Arginine 93, arginine 103, arginine 131, and aspartate 220 together coordinate substrate. Mg(2+)-binding residues include aspartate 220, aspartate 244, and aspartate 248. 278-290 (GSAPDIAGKNLAN) provides a ligand contact to NAD(+).

This sequence belongs to the isocitrate and isopropylmalate dehydrogenases family. LeuB type 1 subfamily. Homodimer. The cofactor is Mg(2+). Mn(2+) serves as cofactor.

It localises to the cytoplasm. The catalysed reaction is (2R,3S)-3-isopropylmalate + NAD(+) = 4-methyl-2-oxopentanoate + CO2 + NADH. It participates in amino-acid biosynthesis; L-leucine biosynthesis; L-leucine from 3-methyl-2-oxobutanoate: step 3/4. Functionally, catalyzes the oxidation of 3-carboxy-2-hydroxy-4-methylpentanoate (3-isopropylmalate) to 3-carboxy-4-methyl-2-oxopentanoate. The product decarboxylates to 4-methyl-2 oxopentanoate. The chain is 3-isopropylmalate dehydrogenase from Thiobacillus denitrificans (strain ATCC 25259 / T1).